Reading from the N-terminus, the 228-residue chain is Ribose-5-phosphate isomerase A (228 aa).

Residues 26-29, 81-84, and 94-97 contribute to the substrate site; these read SGST, DGAD, and KGGG. The active-site Proton acceptor is Glu103. Substrate is bound at residue Lys121.

The protein belongs to the ribose 5-phosphate isomerase family. Homodimer.

The catalysed reaction is aldehydo-D-ribose 5-phosphate = D-ribulose 5-phosphate. It participates in carbohydrate degradation; pentose phosphate pathway; D-ribose 5-phosphate from D-ribulose 5-phosphate (non-oxidative stage): step 1/1. Functionally, catalyzes the reversible conversion of ribose-5-phosphate to ribulose 5-phosphate. The protein is Ribose-5-phosphate isomerase A of Shouchella clausii (strain KSM-K16) (Alkalihalobacillus clausii).